An 844-amino-acid polypeptide reads, in one-letter code: Translation elongation factor 2 (844 aa).

The 332-residue stretch at 17–348 (RNIRNMSVIA…MIAIHLPSPV (332 aa)) folds into the tr-type G domain. Residue 26-33 (AHVDHGKS) coordinates GTP. Thr57 and Thr59 each carry phosphothreonine. GTP is bound by residues 162-165 (NKMD) and 219-221 (SGL). Position 488 is a phosphoserine (Ser488). Diphthamide is present on His701.

The protein belongs to the TRAFAC class translation factor GTPase superfamily. Classic translation factor GTPase family. EF-G/EF-2 subfamily. In terms of processing, phosphorylation by EF-2 kinase completely inactivates EF-2.

The protein resides in the cytoplasm. The catalysed reaction is GTP + H2O = GDP + phosphate + H(+). Its function is as follows. Catalyzes the GTP-dependent ribosomal translocation step during translation elongation. During this step, the ribosome changes from the pre-translocational (PRE) to the post-translocational (POST) state as the newly formed A-site-bound peptidyl-tRNA and P-site-bound deacylated tRNA move to the P and E sites, respectively. Catalyzes the coordinated movement of the two tRNA molecules, the mRNA and conformational changes in the ribosome. This chain is Translation elongation factor 2, found in Bombyx mori (Silk moth).